The primary structure comprises 314 residues: 4-diphosphocytidyl-2-C-methyl-D-erythritol kinase (314 aa).

Lys11 is an active-site residue. 95 to 105 (PIGAGLAGGST) contributes to the ATP binding site. The active site involves Asp137.

This sequence belongs to the GHMP kinase family. IspE subfamily.

The enzyme catalyses 4-CDP-2-C-methyl-D-erythritol + ATP = 4-CDP-2-C-methyl-D-erythritol 2-phosphate + ADP + H(+). It participates in isoprenoid biosynthesis; isopentenyl diphosphate biosynthesis via DXP pathway; isopentenyl diphosphate from 1-deoxy-D-xylulose 5-phosphate: step 3/6. Catalyzes the phosphorylation of the position 2 hydroxy group of 4-diphosphocytidyl-2C-methyl-D-erythritol. The sequence is that of 4-diphosphocytidyl-2-C-methyl-D-erythritol kinase from Synechococcus elongatus (strain ATCC 33912 / PCC 7942 / FACHB-805) (Anacystis nidulans R2).